The sequence spans 418 residues: UDP-N-acetylglucosamine 1-carboxyvinyltransferase (418 aa).

Position 22 to 23 (22 to 23 (KN)) interacts with phosphoenolpyruvate. R92 contributes to the UDP-N-acetyl-alpha-D-glucosamine binding site. Catalysis depends on C116, which acts as the Proton donor. The residue at position 116 (C116) is a 2-(S-cysteinyl)pyruvic acid O-phosphothioketal. UDP-N-acetyl-alpha-D-glucosamine contacts are provided by residues 121 to 125 (RPVDQ), D306, and I328.

Belongs to the EPSP synthase family. MurA subfamily.

Its subcellular location is the cytoplasm. It carries out the reaction phosphoenolpyruvate + UDP-N-acetyl-alpha-D-glucosamine = UDP-N-acetyl-3-O-(1-carboxyvinyl)-alpha-D-glucosamine + phosphate. Its pathway is cell wall biogenesis; peptidoglycan biosynthesis. Cell wall formation. Adds enolpyruvyl to UDP-N-acetylglucosamine. This chain is UDP-N-acetylglucosamine 1-carboxyvinyltransferase, found in Acinetobacter baylyi (strain ATCC 33305 / BD413 / ADP1).